The following is a 440-amino-acid chain: L-gulonolactone oxidase (440 aa).

One can recognise an FAD-binding PCMH-type domain in the interval 17-187 (YGCCPEMYFQ…LTVTLQCVPQ (171 aa)). Residue H54 is modified to Pros-8alpha-FAD histidine. Residues 253–273 (FYLLEFLLWISTFLPGLVGWI) traverse the membrane as a helical segment.

It belongs to the oxygen-dependent FAD-linked oxidoreductase family. FAD serves as cofactor.

It is found in the microsome membrane. The protein resides in the endoplasmic reticulum membrane. It catalyses the reaction L-gulono-1,4-lactone + O2 = L-ascorbate + H2O2 + H(+). It functions in the pathway cofactor biosynthesis; L-ascorbate biosynthesis via UDP-alpha-D-glucuronate pathway; L-ascorbate from UDP-alpha-D-glucuronate: step 4/4. In terms of biological role, oxidizes L-gulono-1,4-lactone to hydrogen peroxide and L-xylo-hexulonolactone which spontaneously isomerizes to L-ascorbate. The polypeptide is L-gulonolactone oxidase (GULO) (Bos taurus (Bovine)).